A 449-amino-acid chain; its full sequence is Hyaluronidase-2 (449 aa).

Positions 1 to 23 (MYHLWIKCLAAWIFLKRCNGVHA) are cleaved as a signal peptide. 2 cysteine pairs are disulfide-bonded: cysteine 47–cysteine 340 and cysteine 211–cysteine 227. N-linked (GlcNAc...) asparagine glycans are attached at residues asparagine 67, asparagine 103, and asparagine 111. Glutamate 135 (proton donor) is an active-site residue. Asparagine 153 carries an N-linked (GlcNAc...) asparagine glycan. A glycan (N-linked (GlcNAc...) asparagine) is linked at asparagine 357. Cystine bridges form between cysteine 365–cysteine 376, cysteine 370–cysteine 427, and cysteine 429–cysteine 438. Asparagine 401 is a glycosylation site (N-linked (GlcNAc...) asparagine). An EGF-like domain is found at 427 to 438 (CQCYQGWKGLYC).

Belongs to the glycosyl hydrolase 56 family. As to quaternary structure, monomer. As to expression, expressed by the venom gland.

The protein resides in the secreted. The enzyme catalyses Random hydrolysis of (1-&gt;4)-linkages between N-acetyl-beta-D-glucosamine and D-glucuronate residues in hyaluronate.. In terms of biological role, snake venom endo-hyaluronidase that degrades hyaluronan to smaller oligosaccharide fragments. In venom, it is not toxic by itself, but increases the diffusion of other venom proteins by degrading the extracellular matrix. In addition, it displays antiedematogenic activity. This chain is Hyaluronidase-2, found in Bitis arietans (African puff adder).